A 335-amino-acid polypeptide reads, in one-letter code: MWERIFLAAALALMITLILGPLMIPVLRVMKFGQTIREEGPKRHLAKAGTPTMGGIIFLVGIVVSALIMAEKPTSLEMVMVISAMLGYGLIGFIDDFIKVVLHRSLGLRAYQKLIGQIALALLLTWGANRYLGRGTDLVIPFTSIHLELGLFYYPFVSFIIVGITNAVNLTDGLDGLAAGTTLFSMLSYVSIATLAASQGGGVAILAYESDLAVFAAAAVGGCFGFLRFNKNPARVFMGDTGSLALGGALVGLAVLTKTELILLIIGGVYVVEAISVILQVFSYQTTGKRIFRMSPLHHHFELGGWNEWKVVMVFWLASLLCGVLGVIAYMAGMF.

10 consecutive transmembrane segments (helical) span residues 5–25 (IFLAAALALMITLILGPLMIP), 50–70 (TPTMGGIIFLVGIVVSALIMA), 78–98 (MVMVISAMLGYGLIGFIDDFI), 114–133 (LIGQIALALLLTWGANRYLG), 145–165 (IHLELGLFYYPFVSFIIVGIT), 177–197 (LAAGTTLFSMLSYVSIATLAA), 200–220 (GGGVAILAYESDLAVFAAAAV), 236–256 (VFMGDTGSLALGGALVGLAVL), 262–282 (ILLIIGGVYVVEAISVILQVF), and 311–331 (VVMVFWLASLLCGVLGVIAYM).

The protein belongs to the glycosyltransferase 4 family. MraY subfamily. Requires Mg(2+) as cofactor.

The protein resides in the cell membrane. It catalyses the reaction UDP-N-acetyl-alpha-D-muramoyl-L-alanyl-gamma-D-glutamyl-meso-2,6-diaminopimeloyl-D-alanyl-D-alanine + di-trans,octa-cis-undecaprenyl phosphate = di-trans,octa-cis-undecaprenyl diphospho-N-acetyl-alpha-D-muramoyl-L-alanyl-D-glutamyl-meso-2,6-diaminopimeloyl-D-alanyl-D-alanine + UMP. It functions in the pathway cell wall biogenesis; peptidoglycan biosynthesis. In terms of biological role, catalyzes the initial step of the lipid cycle reactions in the biosynthesis of the cell wall peptidoglycan: transfers peptidoglycan precursor phospho-MurNAc-pentapeptide from UDP-MurNAc-pentapeptide onto the lipid carrier undecaprenyl phosphate, yielding undecaprenyl-pyrophosphoryl-MurNAc-pentapeptide, known as lipid I. This is Phospho-N-acetylmuramoyl-pentapeptide-transferase from Desulfitobacterium hafniense (strain DSM 10664 / DCB-2).